Consider the following 382-residue polypeptide: Glutamyl-tRNA reductase (382 aa).

Residues Thr38–Arg41, Ser85, Glu90–Gln92, and Gln96 contribute to the substrate site. Cys39 (nucleophile) is an active-site residue. Position 164-169 (Gly164–Gly169) interacts with NADP(+).

The protein belongs to the glutamyl-tRNA reductase family. In terms of assembly, homodimer.

It catalyses the reaction (S)-4-amino-5-oxopentanoate + tRNA(Glu) + NADP(+) = L-glutamyl-tRNA(Glu) + NADPH + H(+). It functions in the pathway porphyrin-containing compound metabolism; protoporphyrin-IX biosynthesis; 5-aminolevulinate from L-glutamyl-tRNA(Glu): step 1/2. Its function is as follows. Catalyzes the NADPH-dependent reduction of glutamyl-tRNA(Glu) to glutamate 1-semialdehyde (GSA). The polypeptide is Glutamyl-tRNA reductase (Methanococcus maripaludis (strain DSM 14266 / JCM 13030 / NBRC 101832 / S2 / LL)).